The sequence spans 431 residues: Tryptophan synthase beta chain 2 (431 aa).

Position 111 is an N6-(pyridoxal phosphate)lysine (Lys111).

The protein belongs to the TrpB family. As to quaternary structure, tetramer of two alpha and two beta chains. It depends on pyridoxal 5'-phosphate as a cofactor.

It catalyses the reaction (1S,2R)-1-C-(indol-3-yl)glycerol 3-phosphate + L-serine = D-glyceraldehyde 3-phosphate + L-tryptophan + H2O. The protein operates within amino-acid biosynthesis; L-tryptophan biosynthesis; L-tryptophan from chorismate: step 5/5. The beta subunit is responsible for the synthesis of L-tryptophan from indole and L-serine. In Sulfurisphaera tokodaii (strain DSM 16993 / JCM 10545 / NBRC 100140 / 7) (Sulfolobus tokodaii), this protein is Tryptophan synthase beta chain 2 (trpB2).